The primary structure comprises 108 residues: UPF0060 membrane protein SAR2425 (108 aa).

Helical transmembrane passes span 5-25, 31-51, 60-80, and 86-106; these read IFIF…IWLW, SSLV…IATF, VYAA…MVVD, and KYDV…LLPS.

It belongs to the UPF0060 family.

The protein resides in the cell membrane. In Staphylococcus aureus (strain MRSA252), this protein is UPF0060 membrane protein SAR2425.